Here is a 619-residue protein sequence, read N- to C-terminus: MSRIARLSDVLINKIAAGEVVERPASVVKELVENAIDAGAGTVRVELDGGGVDRIIVSDDGHGMGRSDAVACLERHATSKLRELDDLFHIDSMGFRGEAIPAIASVSRFTLHSAAANSEVGTRVSVEGGGPPLVEDAPPRTGTVMTVEDLFFNVPARRKFLRRGDTELKHAEEAVVRLALAYPEVGFFASHEGGTLFSSAACPDDPRERIAAALGSTSHPHLFPVEERRLGVAVTGFAASPEFTFNNARGLYTFVNRRYIRDRGLIGTIQRAYQDFLAAGRQPVVVLHIDVDPRAVDVNVHPQKQEVRFADARGVQEALTAALSRMLRAAPWLGSGVEGAAPQAGQPMDAAHYAHAVERFLTRAQEAAWGGPLPTAMDAPGPGPGAPSLGPLGQGARPGALPFAAAVGQAPAFGQAQPQLNEAPPPGYFGALRPLGMLGGRFHVCEGPGGTLVVMDPHAALERARLTGYLRALESGKPPPAPTLFGTTLELPVAAAKALVEGREALSRLGFDVEPFGGTTVALKTVPPGLEGADARSLLEALARALPPKSATLDTVSLAEAVRVMACHAAKQAGAVPLSDAQFRALLGELDRADFHPTCSHGTVVVLEMPLLELERRAR.

This sequence belongs to the DNA mismatch repair MutL/HexB family.

Functionally, this protein is involved in the repair of mismatches in DNA. It is required for dam-dependent methyl-directed DNA mismatch repair. May act as a 'molecular matchmaker', a protein that promotes the formation of a stable complex between two or more DNA-binding proteins in an ATP-dependent manner without itself being part of a final effector complex. This Myxococcus xanthus (strain DK1622) protein is DNA mismatch repair protein MutL.